The following is a 119-amino-acid chain: NAD(P)H-quinone oxidoreductase subunit M (119 aa).

This sequence belongs to the complex I NdhM subunit family. NDH-1 can be composed of about 15 different subunits; different subcomplexes with different compositions have been identified which probably have different functions.

It is found in the cell inner membrane. The catalysed reaction is a plastoquinone + NADH + (n+1) H(+)(in) = a plastoquinol + NAD(+) + n H(+)(out). It carries out the reaction a plastoquinone + NADPH + (n+1) H(+)(in) = a plastoquinol + NADP(+) + n H(+)(out). NDH-1 shuttles electrons from an unknown electron donor, via FMN and iron-sulfur (Fe-S) centers, to quinones in the respiratory and/or the photosynthetic chain. The immediate electron acceptor for the enzyme in this species is believed to be plastoquinone. Couples the redox reaction to proton translocation, and thus conserves the redox energy in a proton gradient. Cyanobacterial NDH-1 also plays a role in inorganic carbon-concentration. This Gloeobacter violaceus (strain ATCC 29082 / PCC 7421) protein is NAD(P)H-quinone oxidoreductase subunit M.